Consider the following 375-residue polypeptide: Succinyl-diaminopimelate desuccinylase (375 aa).

A Zn(2+)-binding site is contributed by histidine 66. Aspartate 68 is a catalytic residue. Zn(2+) is bound at residue aspartate 99. Catalysis depends on glutamate 133, which acts as the Proton acceptor. Positions 134, 162, and 348 each coordinate Zn(2+).

It belongs to the peptidase M20A family. DapE subfamily. In terms of assembly, homodimer. Zn(2+) serves as cofactor. The cofactor is Co(2+).

The enzyme catalyses N-succinyl-(2S,6S)-2,6-diaminopimelate + H2O = (2S,6S)-2,6-diaminopimelate + succinate. It functions in the pathway amino-acid biosynthesis; L-lysine biosynthesis via DAP pathway; LL-2,6-diaminopimelate from (S)-tetrahydrodipicolinate (succinylase route): step 3/3. Functionally, catalyzes the hydrolysis of N-succinyl-L,L-diaminopimelic acid (SDAP), forming succinate and LL-2,6-diaminopimelate (DAP), an intermediate involved in the bacterial biosynthesis of lysine and meso-diaminopimelic acid, an essential component of bacterial cell walls. The chain is Succinyl-diaminopimelate desuccinylase from Teredinibacter turnerae (strain ATCC 39867 / T7901).